The chain runs to 238 residues: D/L-lactic acid transporter (238 aa).

Helical transmembrane passes span 2–22 (VHQLIAEFMGTALMIIFGVGV) and 39–59 (IFAITTWGFGISVALFIFGNV). An NPA 1 motif is present at residues 62-64 (NPA). The next 3 helical transmembrane spans lie at 80–100 (FIPYSVAEVLGGVVGSVIVWI), 135–155 (FFVELFDTFIFISGILAISEI), and 158–178 (PGIVPIGVGLLVWAIGMGLGG). Positions 185–187 (NLA) match the NPA 2 motif. Residues 211-231 (YGIIVPGIAPFVGAAIAAWFM) traverse the membrane as a helical segment.

It belongs to the MIP/aquaporin (TC 1.A.8) family.

Its subcellular location is the cell membrane. Its function is as follows. Transporter that facilitates the transmembrane diffusion of D/L-lactic acid. Is involved in the cellular racemization of lactate and lactate metabolism. The transported molecule is indeed lactic acid and not the lactate anion, in agreement with the assumption that, with very few exceptions, MIPs (major intrinsic proteins) only facilitate the transport of uncharged solutes. Also facilitates urea and H(2)O(2) diffusion across membranes, but is not permeable to water, glycerol and dihydroxyacetone. This is D/L-lactic acid transporter from Lactiplantibacillus plantarum (strain ATCC BAA-793 / NCIMB 8826 / WCFS1) (Lactobacillus plantarum).